Consider the following 504-residue polypeptide: Maturase K (504 aa).

It belongs to the intron maturase 2 family. MatK subfamily.

The protein localises to the plastid. It localises to the chloroplast. Its function is as follows. Usually encoded in the trnK tRNA gene intron. Probably assists in splicing its own and other chloroplast group II introns. This Nepenthes distillatoria (Pitcher plant) protein is Maturase K.